A 564-amino-acid chain; its full sequence is Lamassu protein LmuB (564 aa).

Functionally, component of antiviral defense system Lamassu type II, composed of LmuA and LmuB. Expression of Lamassu type II in B.subtilis (strain BEST7003) confers resistance to phage SpBeta. May be an ATPase. In Bacillus cereus (strain VD014), this protein is Lamassu protein LmuB.